Reading from the N-terminus, the 480-residue chain is Ciliated left-right organizer protein containing ZP-N domains homolog (480 aa).

An N-terminal signal peptide occupies residues 1-23 (MKNQHNTFWVLCLLFVMFDETFS).

Expressed specifically by cells of the ciliated left-right organizer.

The protein localises to the secreted. The sequence is that of Ciliated left-right organizer protein containing ZP-N domains homolog from Xenopus tropicalis (Western clawed frog).